Reading from the N-terminus, the 516-residue chain is Cytochrome P450 6d1 (516 aa).

C461 is a binding site for heme.

It belongs to the cytochrome P450 family. Requires heme as cofactor.

It localises to the endoplasmic reticulum membrane. It is found in the microsome membrane. Its function is as follows. Metabolizes pyrethroid insecticides and other xenobiotics. This chain is Cytochrome P450 6d1 (CYP6D1), found in Musca domestica (House fly).